Reading from the N-terminus, the 670-residue chain is MNLNYQYAGLIPILPVFPSIFIGIGLMSFRKSFRNLRKFVGSMSIAFMFLTLILSLLFFNDQLSESYSYRFLFPWLSTKNLTLDIGYLIDPLTSIMLVLVTSVAVTVMIYSDGYMLHDQGYIRFFAYLSLFTASMLGLIVSPNLIQVYVFWELIGMCSYLLVGFWSTRPTAASACQKAFITNRVGDFGLLLGILGFYWLTGSFQFDIIQDRLNELLLTNNLNFTLFIISSVLLFLGPIAKSAQFPLHIWLPDAMEGPTPISALIHAATMVAAGIFLVARLLPIFQLSPLLMILIAFTGAITALLGACLAVAQTDLKRGLAYSTMSQLGYMMLGLGIGGYQAAIFHLITHAYSKALLFLGSGSVIHSMEPVVGYDPNKSQNIDYMGGLRKYMPITGVTFLIGTLSLCGIPPFACFWSKDEIIADAFFHLPLLGFIAWLTAGLTGFYMFRLYLLTFEGEFRAHKNLKSSSLEYPHESSFSMTLPLILLMFPTIFIGFLGLPYNLGFIQSQILSTWLVGPSIDLNSSSNWIDFFKTSATSVGIAFLGICFSFLLYSPKNASNRDFNQISNPVPKGFLSSYVKSFYNWSLNRAYIDKFYELTWIKWCGIFAQFTSYLDRWFFDGFVNGVGLLTLISGEALRYGENGKVSSYLFVILFSFILLILLGNFNSVFYF.

The next 16 membrane-spanning stretches (helical) occupy residues Gly-9–Phe-29, Phe-39–Phe-59, Ile-85–Val-105, Gly-120–Val-140, Leu-144–Phe-164, Gly-188–Ile-208, Leu-215–Leu-235, Thr-258–Ala-278, Leu-290–Val-310, Leu-327–Ile-347, Ala-354–Asp-374, Gly-395–Trp-415, Ala-424–Phe-444, Met-479–Pro-499, Ser-534–Pro-554, and Leu-648–Phe-668.

Belongs to the complex I subunit 5 family. NDH is composed of at least 16 different subunits, 5 of which are encoded in the nucleus.

It is found in the plastid. It localises to the chloroplast thylakoid membrane. The enzyme catalyses a plastoquinone + NADH + (n+1) H(+)(in) = a plastoquinol + NAD(+) + n H(+)(out). It catalyses the reaction a plastoquinone + NADPH + (n+1) H(+)(in) = a plastoquinol + NADP(+) + n H(+)(out). Its function is as follows. NDH shuttles electrons from NAD(P)H:plastoquinone, via FMN and iron-sulfur (Fe-S) centers, to quinones in the photosynthetic chain and possibly in a chloroplast respiratory chain. The immediate electron acceptor for the enzyme in this species is believed to be plastoquinone. Couples the redox reaction to proton translocation, and thus conserves the redox energy in a proton gradient. The chain is NAD(P)H-quinone oxidoreductase subunit 5, chloroplastic (ndhF) from Chaetosphaeridium globosum (Charophycean green alga).